The following is a 325-amino-acid chain: Transcription initiation factor IIB (325 aa).

The TFIIB-type zinc finger occupies 19–52 (NKLWCMVCRIQDPDIIEDYAKGDLICRGCGVVVG). Positions 23, 26, 44, and 47 each coordinate Zn(2+). Repeat copies occupy residues 131–207 (MADH…IMKE) and 227–303 (FCST…DLYA).

This sequence belongs to the TFIIB family.

It is found in the nucleus. In terms of biological role, general transcription factor that plays a role in transcription initiation by RNA polymerase II (Pol II). Involved in the pre-initiation complex (PIC) formation and Pol II recruitment at promoter DNA. The sequence is that of Transcription initiation factor IIB (gtf2b) from Dictyostelium discoideum (Social amoeba).